The sequence spans 376 residues: Alcohol dehydrogenase class-3 (376 aa).

The residue at position 1 (Ala1) is an N-acetylalanine. Residues Cys47, His69, Cys99, Cys102, Cys105, Cys113, and Cys176 each contribute to the Zn(2+) site.

It belongs to the zinc-containing alcohol dehydrogenase family. Class-III subfamily. In terms of assembly, homodimer. Zn(2+) is required as a cofactor.

It is found in the cytoplasm. The catalysed reaction is a primary alcohol + NAD(+) = an aldehyde + NADH + H(+). It carries out the reaction a secondary alcohol + NAD(+) = a ketone + NADH + H(+). The enzyme catalyses S-(hydroxymethyl)glutathione + NADP(+) = S-formylglutathione + NADPH + H(+). It catalyses the reaction S-(hydroxymethyl)glutathione + NAD(+) = S-formylglutathione + NADH + H(+). The catalysed reaction is S-nitrosoglutathione + NADH + H(+) = S-(hydroxysulfenamide)glutathione + NAD(+). In terms of biological role, class-III ADH is remarkably ineffective in oxidizing ethanol, but it readily catalyzes the oxidation of long-chain primary alcohols and the oxidation of S-(hydroxymethyl) glutathione. Also acts as a S-nitroso-glutathione reductase by catalyzing the NADH-dependent reduction of S-nitrosoglutathione, thereby regulating protein S-nitrosylation. The sequence is that of Alcohol dehydrogenase class-3 from Scyliorhinus canicula (Small-spotted catshark).